The sequence spans 582 residues: PX domain-containing protein kinase-like protein (582 aa).

In terms of domain architecture, PX spans 14–126 (LDDTVPLTAA…KFLDPNNYSA (113 aa)). The Protein kinase domain maps to 88-481 (FIAERQRGLQ…VENSEEQPVK (394 aa)). Residues 433-550 (EQKQIHQHRR…APFLPQPVNG (118 aa)) are disordered. Composition is skewed to basic residues over residues 437–448 (IHQHRRLTRAQS) and 457–469 (KRRKILARKKSKR). Low complexity predominate over residues 483–514 (SNSNNSAGSGASSPLTSPSSPTPPSTAGLSSA). Positions 515 to 531 (LPPPPPPPPPPPPPAGP) are enriched in pro residues. The WH2 domain maps to 548-567 (VNGVNRGALLSSIQNFQKGT).

The protein belongs to the protein kinase superfamily. As to expression, isoform 1 is present in all tissues examined. Isoform 2 is found in all tissues except skeletal muscle and very low levels in spleen. Both isoforms are widely expressed throughout the nervous system however levels of isoform 2 are higher in purified hippocampal and cortical neurons whereas glial cells express more isoform 1 than isoform 2.

The protein localises to the cytoplasm. Its subcellular location is the cell membrane. Binds to and modulates brain Na,K-ATPase subunits ATP1B1 and ATP1B3 and may thereby participate in the regulation of electrical excitability and synaptic transmission. May not display kinase activity. The sequence is that of PX domain-containing protein kinase-like protein from Mus musculus (Mouse).